A 51-amino-acid chain; its full sequence is Large ribosomal subunit protein eL39 (51 aa).

This sequence belongs to the eukaryotic ribosomal protein eL39 family.

In Thermoplasma acidophilum (strain ATCC 25905 / DSM 1728 / JCM 9062 / NBRC 15155 / AMRC-C165), this protein is Large ribosomal subunit protein eL39 (rpl39e).